The following is a 107-amino-acid chain: MTRLPPIPRMTVTLTTRPAVPTCNEGSSILHYIYIPIYEPNEQKEKRRRKTPPEPRAYTTTTTIATNSRISGCSLTLEDGIHLRGKRAETARLPAATPQKRTGPARG.

The interval 86–107 (KRAETARLPAATPQKRTGPARG) is disordered.

This is an uncharacterized protein from Saccharomyces cerevisiae (strain ATCC 204508 / S288c) (Baker's yeast).